Here is a 222-residue protein sequence, read N- to C-terminus: MRLILPADTEGIFLERKSRFTGVALVEGKKTLIHIHNTGRLPLLKKGKRVLLKRAESDRRKTGWDLLAVEHRDEFVFVHSGFHSIVAGKILEELFPGSTIESEKRFENSRFDFLIDRRTFVEVKGCTYEEDGVAMFPDAPTERGRRHIEELISSVKSGFKALLLILVFLESDCFLPNRSVDPAFSRVFWRALKSGVNIDVFRVKYDGEYLCSTEKLSICEEV.

This sequence belongs to the SfsA family.

The polypeptide is Sugar fermentation stimulation protein homolog (Thermotoga sp. (strain RQ2)).